Here is a 299-residue protein sequence, read N- to C-terminus: Ubiquinol-cytochrome c reductase complex assembly factor 1 (299 aa).

This sequence belongs to the CBP3 family. In terms of assembly, interacts with UQCC2. Interacts with UQCC3. Forms a complex, named COMB/coordinator of mitochondrial CYTB biogenesis, composed of UQCC1, UQCC2, UQCC4, UQCC5 and UQCC6; stabilizes nascent cytochrome b/MT-CYB and promotes its membrane insertion. Forms a complex, named COMB/coordinator of mitochondrial CYTB biogenesis, composed of UQCC1, UQCC2, UQCC4, UQCC5 and UQCC6; stabilizes nascent cytochrome b/MT-CYB and promotes its membrane insertion. Forms a complex, named COMA, composed of UQCC1, UQCC2 and UQCC4; activates MT-CYB translation. Forms a complex, named COMC, composed of UQCC1, UQCC2; UQCC3 and UQCC4; mediates MT-CYB hemylation and association with the first nuclear-encoded CIII subunit UQCRQ.

The protein resides in the mitochondrion inner membrane. It is found in the cytoplasmic vesicle. In terms of biological role, required for the assembly of the ubiquinol-cytochrome c reductase complex (mitochondrial respiratory chain complex III or cytochrome b-c1 complex). Involved in cytochrome b translation and/or stability. This Homo sapiens (Human) protein is Ubiquinol-cytochrome c reductase complex assembly factor 1 (UQCC1).